The following is a 234-amino-acid chain: Ribonuclease 3 (234 aa).

Residues 4-133 (LLDLEHKLNY…ILGAVYIDSN (130 aa)) enclose the RNase III domain. Residue Glu46 participates in Mg(2+) binding. Asp50 is a catalytic residue. Residues Asp119 and Glu122 each contribute to the Mg(2+) site. The active site involves Glu122. Residues 160–228 (DFKSILQEYV…AKALCIKLGV (69 aa)) enclose the DRBM domain.

It belongs to the ribonuclease III family. As to quaternary structure, homodimer. Mg(2+) is required as a cofactor.

It localises to the cytoplasm. The catalysed reaction is Endonucleolytic cleavage to 5'-phosphomonoester.. In terms of biological role, digests double-stranded RNA. Involved in the processing of primary rRNA transcript to yield the immediate precursors to the large and small rRNAs (23S and 16S). Processes some mRNAs, and tRNAs when they are encoded in the rRNA operon. Processes pre-crRNA and tracrRNA of type II CRISPR loci if present in the organism. The sequence is that of Ribonuclease 3 from Fusobacterium nucleatum subsp. nucleatum (strain ATCC 25586 / DSM 15643 / BCRC 10681 / CIP 101130 / JCM 8532 / KCTC 2640 / LMG 13131 / VPI 4355).